Here is a 1348-residue protein sequence, read N- to C-terminus: Phosphoribosylformylglycinamidine synthase (1348 aa).

Residues 300 to 311 (GAATGAGGEIRD) and Ala701 each bind ATP. Residues Asp702, Glu741, Asn745, and Asp941 each contribute to the Mg(2+) site. Ser943 serves as a coordination point for ATP. Residues 1099–1348 (VAILREQGVN…MFRNARVWCG (250 aa)) form the Glutamine amidotransferase type-1 domain. Cys1192 (nucleophile) is an active-site residue. Catalysis depends on residues His1313 and Glu1315.

This sequence in the N-terminal section; belongs to the FGAMS family. Monomer.

Its subcellular location is the cytoplasm. It catalyses the reaction N(2)-formyl-N(1)-(5-phospho-beta-D-ribosyl)glycinamide + L-glutamine + ATP + H2O = 2-formamido-N(1)-(5-O-phospho-beta-D-ribosyl)acetamidine + L-glutamate + ADP + phosphate + H(+). It participates in purine metabolism; IMP biosynthesis via de novo pathway; 5-amino-1-(5-phospho-D-ribosyl)imidazole from N(2)-formyl-N(1)-(5-phospho-D-ribosyl)glycinamide: step 1/2. Phosphoribosylformylglycinamidine synthase involved in the purines biosynthetic pathway. Catalyzes the ATP-dependent conversion of formylglycinamide ribonucleotide (FGAR) and glutamine to yield formylglycinamidine ribonucleotide (FGAM) and glutamate. The chain is Phosphoribosylformylglycinamidine synthase from Xanthomonas axonopodis pv. citri (strain 306).